Reading from the N-terminus, the 403-residue chain is Protein-export membrane protein SecD (403 aa).

6 helical membrane passes run 14-34 (VILL…MGIQ), 238-258 (FAEG…VILI), 265-285 (ILVL…LGAA), 294-314 (LAAI…QIII), 336-356 (FFII…LAYI), and 365-385 (IGLL…GVFI).

The protein belongs to the SecD/SecF family. SecD subfamily. Part of the protein translocation apparatus. Forms a complex with SecF.

The protein resides in the cell membrane. Involved in protein export. The chain is Protein-export membrane protein SecD from Methanothermobacter thermautotrophicus (strain ATCC 29096 / DSM 1053 / JCM 10044 / NBRC 100330 / Delta H) (Methanobacterium thermoautotrophicum).